A 187-amino-acid chain; its full sequence is MLRELVIYGDERLQKVSEKIEKIDDEILTLIDDMFETMYKERGVGLAAVQIGVLKRLVVISVPDFDDEEKPDFKLALINPEIIWHNDETESLEEGCLSFPEIRDDVARYTQIKVKYLDREGNEQILDAENYIAKVLQHEIDHTNGISFIDRLESYQKRRLKRELKELRNNTVRGIKKVNNREMLKNS.

Residues Cys-96 and His-138 each contribute to the Fe cation site. Glu-139 is an active-site residue. His-142 contacts Fe cation.

Belongs to the polypeptide deformylase family. Fe(2+) is required as a cofactor.

The enzyme catalyses N-terminal N-formyl-L-methionyl-[peptide] + H2O = N-terminal L-methionyl-[peptide] + formate. Removes the formyl group from the N-terminal Met of newly synthesized proteins. Requires at least a dipeptide for an efficient rate of reaction. N-terminal L-methionine is a prerequisite for activity but the enzyme has broad specificity at other positions. The protein is Peptide deformylase of Brachyspira hyodysenteriae (strain ATCC 49526 / WA1).